The chain runs to 625 residues: Putative surface protein bspA-like (625 aa).

The Extracellular segment spans residues methionine 1–glycine 548. N-linked (GlcNAc...) asparagine glycosylation occurs at asparagine 15. LRR repeat units lie at residues cysteine 38–glycine 60, cysteine 61–glutamate 83, serine 85–glycine 106, cysteine 107–glycine 129, cysteine 153–glycine 175, cysteine 176–glutamate 198, serine 200–arginine 221, cysteine 222–cysteine 245, lysine 247–lysine 267, leucine 271–asparagine 293, isoleucine 325–histidine 347, phenylalanine 348–phenylalanine 368, and isoleucine 369–aspartate 392. N-linked (GlcNAc...) asparagine glycosylation occurs at asparagine 227. The disordered stretch occupies residues lysine 439–asparagine 538. Low complexity predominate over residues glutamate 443–glycine 526. A helical transmembrane segment spans residues isoleucine 549–phenylalanine 571. At methionine 572–valine 625 the chain is on the cytoplasmic side. Positions lysine 577–valine 625 are disordered. A compositionally biased stretch (polar residues) spans glutamate 588–valine 625.

It localises to the cell membrane. In terms of biological role, may bind host tissue. The protein is Putative surface protein bspA-like (BSPAL1) of Trichomonas vaginalis.